Consider the following 2148-residue polypeptide: MDALESLLDEVALEGLDGLCLPALWSRLESRSPAFPLPLEPYTQEFLWRALVTHPGISFYEEPRERPDLQLQDRYEEIDLETGILESRRDPVTLEDVYPIHMILENKDGIQGSCRYFKERKDITSSIRSKCLQPRCTMVEAFSRWGKKLIIVASQDMRYRALIGLEGDPDLKLPDFSYCILERLGRSRWQGELQRDLHTTAFKVDAGKLHYHRKILNKNGLITMQSHVIRLPTGAQQHSILLLLNRFHVDRRSKYDILMEKLSMMLSTRSNQIETLGKLREELGLCERTFKRLYQYMLNAGLAKVVSLPLQEIHPECGPCKTKKGTDVMVRCLKLLKEFRRKMEDDHDDDDDEEAISKAVPPVDIVFERDMLTQTYELIERRGTKGISQAEIRVAMNVGKLEARMLCRLLQRFKVVKGFMEDEGRQRTTKYISCVFAEESDLSRQYAREKARGELLTTVSLASVQDESLMPEGEEAFLSDSESEEESSCSGKRRGRGSRGHSRASGDAGPGSRPHHSTPAKGGWKVLNLHPLKKPKSAAVERSRRSSACRDGLDTSSSSELNIPFDPHSMDSHSGDIAVIEEVRLDNPKEGGGSQKGGRHGSGQDKPHKTYRLLKRRNLIIEAVTNLRLIESLFTIQKMIMDQEKQEGVSTKCCKKSIIRLVRNLSEEGLLRLYRTTVIQDGIKKKVDLVVHPSMDQNDPLVRSAIEQVRFRISNSSTANRVKVPPAPAPQEEAEEGNQEPEVPSRSADSEANTSSKPESTRVKKTDEKMGITPLKNYKPVIVPGLGRSIGFLPKMPRLRVMHLFLWYLVYGHPASHTGEQPTFHSERKTGKQEPSRPGVQPSSGDDWDSSEAKNSTESSSWEAEMELSTERVYVDEISWMRYVPPIPIHRDFGFGWALVSDILLCLPLSIFVQVVQVSYKVDNLEDFLNDPLKKHTLIRFLPRHIRQQLLYKRRYIFSVVENLQRLCYMGLLQFGPTEKFQDKDQVFVFLKKNAVIVDTTICDPHYNLAHSSRPFERRLYVLDSMQDVESYWFDLQCICLNTPLGVVRCPCAQKICPDPGSDPEGSLRKEQESAMDKHNLERKCAMLEYTTGSREVVDEGLVPGDGLGAAGLDSSFYAHLKRNWVWTSYIINKARKNNTSENGLTGRLQTFLSKRPMPLGSGGSGRLPLWSEGKADAELCADKEEHFELDREPTPGRNRKVRGGKSQKRKRLKKEPIRKTKRRRRGEHPEAKSKKLRYQDEADQNALRMMTRLRVSWSMQEDGLLMLCRIASNVLNTKVKGPFVTWQVVRDILHATFEESLDKTSHSVGRRARYIVKNPQAFMNYKVCLAEVYQDKALVGDFMSRKDNYEDPKVCAKEFKEFVEKLKEKFSSGLRNPNLEIPDTLQELFAKYRVLAIGDEKDRVRKEDELNSVEDIHFLVLQNLIQSTLSLSNSQSNSCQSFQIFRLYREFREPVLVRAFMECQKRSLVNRRRVSHSQGPKKNRAVPFVPMSYQLSQSYYKLFTWRFPTTVCTESFQFYDRLRANGILDQPDHFSFKDMDSNDPSSDLVAFSLDSPGGHCVTALALFSLGLLSVDVRIPEQIVVVDSSMVESEVMKSLGKDGGLDDDDEEEDLDEGSGTKRQSVEVKAHQASHTKYLLMRGYYTVPGMVSTRNLNPNDSIVVNSCQVKFRLRNTPAPTHLGPTGPTATPLEELQAGPSCLPASFTSLVDPQLHTRCPEEFAHQMAQSGYSPEDVAASLEILQAVAAADCFGVDREKLSRQFSALEKIADKRTRTFLDYIQDLLEQQQVMEVGGNTVRLVAMASAQPWLLPSVRLKDVEIDTKASGDDSQSRLPAGSSIEDHTSEGAPIPPVSSNGTKKRPYCSIQSPETDAEEATRLPAKKPTLQDVCVAASPRPGTEEQTEAQAQFAAPEDAGAEGPRQESQESVGVSGLEQLGCEFQLPENSEDPRGLTESNMAQVAWESGCERVCFVGRPWRGVDGRLNMPVCKGMMEAVLYHIMSRPGVPESCLLQYYQGVLQPVAVLELLRGLESLGCIQKRMLKKPASVSLFSRPVVEGLGQASEAEALSCQGSTVTFYEPTLDCTIRLGRVFPHDINWKQSGSIYRCVPGQQRSLCPCLIVPPGLSQEPRPSHSCYQSSAQPSTGVATSR.

The segment covering 473-487 has biased composition (acidic residues); the sequence is GEEAFLSDSESEEES. Disordered regions lie at residues 473–568 and 587–609; these read GEEA…FDPH and NPKE…KPHK. The span at 491-502 shows a compositional bias: basic residues; sequence GKRRGRGSRGHS. Lys533 participates in a covalent cross-link: Glycyl lysine isopeptide (Lys-Gly) (interchain with G-Cter in SUMO2). Ser666 is subject to Phosphoserine. Disordered regions lie at residues 717–771 and 818–863; these read STAN…EKMG and TGEQ…SSWE. Basic and acidic residues-rich tracts occupy residues 759–770 and 825–835; these read ESTRVKKTDEKM and HSERKTGKQEP. Glycyl lysine isopeptide (Lys-Gly) (interchain with G-Cter in SUMO2) cross-links involve residues Lys769 and Lys832. Ser1062 carries the phosphoserine modification. A compositionally biased stretch (basic and acidic residues) spans 1186–1195; sequence EHFELDREPT. Disordered stretches follow at residues 1186–1238, 1597–1627, 1823–1881, 1893–1928, and 2127–2148; these read EHFE…KKLR, KSLG…SVEV, KASG…LPAK, SPRP…ESVG, and PRPS…ATSR. Thr1195 is subject to Phosphothreonine. A compositionally biased stretch (basic residues) spans 1198-1214; the sequence is RNRKVRGGKSQKRKRLK. A compositionally biased stretch (basic and acidic residues) spans 1228-1238; the sequence is EHPEAKSKKLR. A compositionally biased stretch (acidic residues) spans 1605 to 1616; the sequence is LDDDDEEEDLDE. Phosphoserine is present on residues Ser1624, Ser1853, and Ser1893. Residues 1903-1912 are compositionally biased toward low complexity; the sequence is EAQAQFAAPE. Positions 2132–2148 are enriched in polar residues; sequence SCYQSSAQPSTGVATSR.

Belongs to the TFIIIC subunit 1 family. As to quaternary structure, part of the TFIIIC subcomplex TFIIIC2, consisting of six subunits, GTF3C1, GTF3C2, GTF3C3, GTF3C4, GTF3C5 and GTF3C6. Interacts with IGHMBP2. Interacts with MAF1.

The protein localises to the nucleus. Functionally, required for RNA polymerase III-mediated transcription. Component of TFIIIC that initiates transcription complex assembly on tRNA and is required for transcription of 5S rRNA and other stable nuclear and cytoplasmic RNAs. Binds to the box B promoter element. This is General transcription factor 3C polypeptide 1 (Gtf3c1) from Rattus norvegicus (Rat).